Here is a 397-residue protein sequence, read N- to C-terminus: Cathepsin E-B (397 aa).

An N-terminal signal peptide occupies residues 1–16; it reads MRQILVLLLFVTLVYG. A propeptide spans 17–49 (activation peptide); that stretch reads LIRVPLKRQKSIRKTPKEKGKLSHVWTQQGIDM. A Peptidase A1 domain is found at 74-385; sequence YFGEISIGTP…DRGNNRVGLA (312 aa). The N-linked (GlcNAc...) asparagine glycan is linked to asparagine 86. Residue aspartate 92 is part of the active site. A disulfide bridge connects residues cysteine 105 and cysteine 110. Asparagine 130 is a glycosylation site (N-linked (GlcNAc...) asparagine). Cysteine 268 and cysteine 272 are joined by a disulfide. Aspartate 277 is a catalytic residue. A disulfide bridge connects residues cysteine 310 and cysteine 344.

Belongs to the peptidase A1 family. As to quaternary structure, homodimer; disulfide-linked. Glycosylated. Contains high mannose-type oligosaccharide. As to expression, expressed predominantly in the anterior and posterior adult stomach and at much lower levels in the larval foregut.

The protein resides in the endosome. It catalyses the reaction Similar to cathepsin D, but slightly broader specificity.. Functionally, may have a role in immune function. Probably involved in the processing of antigenic peptides during MHC class II-mediated antigen presentation. This is Cathepsin E-B (ctse-b) from Xenopus laevis (African clawed frog).